A 1188-amino-acid chain; its full sequence is Meiotically up-regulated gene 190 protein (1188 aa).

The segment covering 1–11 has biased composition (polar residues); it reads MSTHSGDSTKQ. Disordered regions lie at residues 1-61 and 83-125; these read MSTH…DPIT and FTVP…EADN. Positions 41 to 61 are enriched in basic and acidic residues; sequence EKKEEQQREQTENEKLFDPIT. The segment covering 84–112 has biased composition (polar residues); that stretch reads TVPNQSIQGSSLPSEKPYLSSNQPTNVYK. Residues 173-193 traverse the membrane as a helical segment; the sequence is LVISWFFTHSIIISAVLPLAI. The SMP-LTD domain maps to 228 to 453; that stretch reads IPESAEWMNH…SPKSMTIDLS (226 aa). The interval 298–318 is disordered; it reads ASESFSEKQASEAEHKDEPEQ. Residues 302–318 show a composition bias toward basic and acidic residues; the sequence is FSEKQASEAEHKDEPEQ. C2 domains lie at 451–576 and 636–781; these read DLSK…ERCD and KEEE…TKWY. Positions 485, 491, 544, 546, 549, and 552 each coordinate Ca(2+). Disordered stretches follow at residues 615 to 639 and 1002 to 1066; these read TIPRSMRDDPAFQNPHGSLDNKEEE and QRAS…GTMN. Residue serine 1005 is modified to Phosphoserine. Acidic residues predominate over residues 1022-1032; sequence DDSVDTEDEET.

Ca(2+) is required as a cofactor.

The protein localises to the cytoplasm. Its subcellular location is the endoplasmic reticulum membrane. The protein resides in the nucleus membrane. It is found in the cytoskeleton. It localises to the microtubule organizing center. The protein localises to the spindle pole body. Has a role in meiosis. The chain is Meiotically up-regulated gene 190 protein (mug190) from Schizosaccharomyces pombe (strain 972 / ATCC 24843) (Fission yeast).